A 331-amino-acid polypeptide reads, in one-letter code: L-lactate dehydrogenase A chain (331 aa).

NAD(+)-binding positions include 29-57 (GMVG…MEDK) and Arg98. Substrate contacts are provided by Arg105, Asn137, and Arg168. Asn137 contacts NAD(+). Residue His192 is the Proton acceptor of the active site. Position 247 (Thr247) interacts with substrate.

This sequence belongs to the LDH/MDH superfamily. LDH family. Homotetramer.

Its subcellular location is the cytoplasm. The enzyme catalyses (S)-lactate + NAD(+) = pyruvate + NADH + H(+). The protein operates within fermentation; pyruvate fermentation to lactate; (S)-lactate from pyruvate: step 1/1. Interconverts simultaneously and stereospecifically pyruvate and lactate with concomitant interconversion of NADH and NAD(+). The sequence is that of L-lactate dehydrogenase A chain (ldha) from Paranotothenia magellanica (Maori cod).